The chain runs to 465 residues: D-arabinitol 4-dehydrogenase (465 aa).

The protein belongs to the mannitol dehydrogenase family.

The catalysed reaction is D-arabinitol + NAD(+) = D-xylulose + NADH + H(+). It functions in the pathway carbohydrate metabolism; D-arabinitol metabolism. This Ralstonia nicotianae (strain ATCC BAA-1114 / GMI1000) (Ralstonia solanacearum) protein is D-arabinitol 4-dehydrogenase (dalD).